The following is a 315-amino-acid chain: Protein-methionine-sulfoxide reductase catalytic subunit MsrP (315 aa).

A signal peptide (tat-type signal) is located at residues 1–45; that stretch reads MPSYRPPKIASSEITPRQVYLRRREFLGAATLGAMALYGAGKASA. Mo-molybdopterin is bound by residues Asn71, 74 to 75, Cys129, Thr164, Asn214, Arg219, and 230 to 232; these read YE and GIK.

It belongs to the MsrP family. Heterodimer of a catalytic subunit (MsrP) and a heme-binding subunit (MsrQ). Mo-molybdopterin serves as cofactor. In terms of processing, predicted to be exported by the Tat system. The position of the signal peptide cleavage has not been experimentally proven.

The protein resides in the periplasm. It catalyses the reaction L-methionyl-[protein] + a quinone + H2O = L-methionyl-(S)-S-oxide-[protein] + a quinol. The enzyme catalyses L-methionyl-[protein] + a quinone + H2O = L-methionyl-(R)-S-oxide-[protein] + a quinol. Part of the MsrPQ system that repairs oxidized periplasmic proteins containing methionine sulfoxide residues (Met-O), using respiratory chain electrons. Thus protects these proteins from oxidative-stress damage caused by reactive species of oxygen and chlorine generated by the host defense mechanisms. MsrPQ is essential for the maintenance of envelope integrity under bleach stress, rescuing a wide series of structurally unrelated periplasmic proteins from methionine oxidation. The catalytic subunit MsrP is non-stereospecific, being able to reduce both (R-) and (S-) diastereoisomers of methionine sulfoxide. The sequence is that of Protein-methionine-sulfoxide reductase catalytic subunit MsrP from Rhizobium etli (strain ATCC 51251 / DSM 11541 / JCM 21823 / NBRC 15573 / CFN 42).